The primary structure comprises 125 residues: Glycoprotein hormones alpha chain (125 aa).

The signal sequence occupies residues 1–30 (MVSAVTTMGCMKAAGVSLLLLYFLLNAADS). 5 disulfides stabilise this stretch: Cys41–Cys64, Cys44–Cys93, Cys61–Cys114, Cys65–Cys116, and Cys92–Cys119. N-linked (GlcNAc...) asparagine glycans are attached at residues Asn85 and Asn110.

This sequence belongs to the glycoprotein hormones subunit alpha family. In terms of assembly, heterodimer. Glycoprotein hormones are heterodimers composed of a common alpha chain described here and a unique beta chain which confers their biological specificity to the different hormones.

The protein resides in the secreted. Its function is as follows. Shared alpha chain of heterodimeric glycoprotein hormones. These hormones bind specific receptors on target cells that in turn activate downstream signaling pathways. Involved in gametogenesis and steroidogenesis. This is Glycoprotein hormones alpha chain (cga) from Fundulus heteroclitus (Killifish).